The following is a 99-amino-acid chain: MAKGQSLQDPFLNALRRERVPVSIYLVNGIKLQGQIESFDQFVILLKNTVSQMVYKHAISTVVPSRPVSHHSNNPGGGSNYHGNNTAASQQSQEADDAE.

The 60-residue stretch at Asp-9 to Val-68 folds into the Sm domain. A disordered region spans residues Pro-64 to Glu-99.

This sequence belongs to the Hfq family. In terms of assembly, homohexamer.

Functionally, RNA chaperone that binds small regulatory RNA (sRNAs) and mRNAs to facilitate mRNA translational regulation in response to envelope stress, environmental stress and changes in metabolite concentrations. Also binds with high specificity to tRNAs. The sequence is that of RNA-binding protein Hfq from Pectobacterium carotovorum subsp. carotovorum (strain PC1).